Consider the following 805-residue polypeptide: Sucrose synthase (805 aa).

Residues 275 to 752 form a GT-B glycosyltransferase region; it reads MVFNVVILSP…GLKRIEEKYT (478 aa).

It belongs to the glycosyltransferase 1 family. Plant sucrose synthase subfamily. Expression is at least 10-fold higher in tubers compared to photosynthetically active tissues.

It carries out the reaction an NDP-alpha-D-glucose + D-fructose = a ribonucleoside 5'-diphosphate + sucrose + H(+). Sucrose-cleaving enzyme that provides UDP-glucose and fructose for various metabolic pathways. The chain is Sucrose synthase from Solanum tuberosum (Potato).